A 431-amino-acid chain; its full sequence is UDP-N-acetylmuramate--L-alanine ligase (431 aa).

ATP is bound at residue 108–114 (GAHGKST).

Belongs to the MurCDEF family.

It localises to the cytoplasm. It catalyses the reaction UDP-N-acetyl-alpha-D-muramate + L-alanine + ATP = UDP-N-acetyl-alpha-D-muramoyl-L-alanine + ADP + phosphate + H(+). The protein operates within cell wall biogenesis; peptidoglycan biosynthesis. In terms of biological role, cell wall formation. In Campylobacter jejuni subsp. doylei (strain ATCC BAA-1458 / RM4099 / 269.97), this protein is UDP-N-acetylmuramate--L-alanine ligase.